Consider the following 313-residue polypeptide: Olfactory receptor 10P1 (313 aa).

Topologically, residues 1–25 (MAGENHTTLPEFLLLGFSDLKALQG) are extracellular. N5 carries N-linked (GlcNAc...) asparagine glycosylation. A helical membrane pass occupies residues 26-46 (PLFWVVLLVYLVTLLGNSLII). The Cytoplasmic portion of the chain corresponds to 47–54 (LLTQVSPA). A helical membrane pass occupies residues 55 to 75 (LHSPMYFFLRQLSVVELFYTT). Topologically, residues 76–100 (DIVPRTLANLGSPHPQAISFQGCAA) are extracellular. The chain crosses the membrane as a helical span at residues 101-121 (QMYVFIVLGISECCLLTAMAY). The Cytoplasmic segment spans residues 122–140 (DRYVAICQPLRYSTLLSPR). A helical transmembrane segment spans residues 141–161 (ACMAMVGTSWLTGIITATTHA). The Extracellular segment spans residues 162–198 (SLIFSLPFRSHPIIPHFLCDILPVLRLASAGKHRSEI). A helical transmembrane segment spans residues 199 to 218 (SVMTATIVFIMIPFSLIVTS). At 219-238 (YIRILGAILAMASTQSRRKV) the chain is on the cytoplasmic side. Residues 239–259 (FSTCSSHLLVVSLFFGTASIT) traverse the membrane as a helical segment. Residues 260–272 (YIRPQAGSSVTTD) are Extracellular-facing. Residues 273–293 (RVLSLFYTVITPMLNPIIYTL) traverse the membrane as a helical segment. The Cytoplasmic portion of the chain corresponds to 294–313 (RNKDVRRALRHLVKRQRPSP).

This sequence belongs to the G-protein coupled receptor 1 family.

The protein resides in the cell membrane. In terms of biological role, odorant receptor. The chain is Olfactory receptor 10P1 (OR10P1) from Homo sapiens (Human).